The primary structure comprises 184 residues: uncharacterized protein (184 aa).

The Nudix hydrolase domain maps to 36 to 164 (LRHRATYIVV…TPDSLKALAL (129 aa)). The Nudix box motif lies at 73-95 (GGVVQADEQLLESARREAEEELG). Positions 89 and 93 each coordinate Mg(2+).

It belongs to the Nudix hydrolase family. Mg(2+) is required as a cofactor.

This is an uncharacterized protein from Salmonella typhi.